We begin with the raw amino-acid sequence, 159 residues long: NADH-quinone oxidoreductase subunit I (159 aa).

2 4Fe-4S ferredoxin-type domains span residues 51-80 (RRYE…IEAD) and 90-119 (TRYD…EGPN). Positions 60, 63, 66, 70, 99, 102, 105, and 109 each coordinate [4Fe-4S] cluster.

The protein belongs to the complex I 23 kDa subunit family. As to quaternary structure, NDH-1 is composed of 14 different subunits. Subunits NuoA, H, J, K, L, M, N constitute the membrane sector of the complex. The cofactor is [4Fe-4S] cluster.

Its subcellular location is the cell membrane. The enzyme catalyses a quinone + NADH + 5 H(+)(in) = a quinol + NAD(+) + 4 H(+)(out). In terms of biological role, NDH-1 shuttles electrons from NADH, via FMN and iron-sulfur (Fe-S) centers, to quinones in the respiratory chain. The immediate electron acceptor for the enzyme in this species is believed to be ubiquinone. Couples the redox reaction to proton translocation (for every two electrons transferred, four hydrogen ions are translocated across the cytoplasmic membrane), and thus conserves the redox energy in a proton gradient. The protein is NADH-quinone oxidoreductase subunit I of Rickettsia africae (strain ESF-5).